The chain runs to 423 residues: Imidazolonepropionase (423 aa).

2 residues coordinate Fe(3+): His-78 and His-80. His-78 and His-80 together coordinate Zn(2+). 4-imidazolone-5-propanoate is bound by residues Arg-87, Tyr-150, and His-183. Tyr-150 provides a ligand contact to N-formimidoyl-L-glutamate. His-247 serves as a coordination point for Fe(3+). His-247 is a binding site for Zn(2+). Residue Glu-250 coordinates 4-imidazolone-5-propanoate. Asp-322 lines the Fe(3+) pocket. Asp-322 contributes to the Zn(2+) binding site. Asn-324 and Gly-326 together coordinate N-formimidoyl-L-glutamate. 4-imidazolone-5-propanoate is bound at residue Ser-327.

It belongs to the metallo-dependent hydrolases superfamily. HutI family. Requires Zn(2+) as cofactor. Fe(3+) serves as cofactor.

It is found in the cytoplasm. It catalyses the reaction 4-imidazolone-5-propanoate + H2O = N-formimidoyl-L-glutamate. The protein operates within amino-acid degradation; L-histidine degradation into L-glutamate; N-formimidoyl-L-glutamate from L-histidine: step 3/3. Functionally, catalyzes the hydrolytic cleavage of the carbon-nitrogen bond in imidazolone-5-propanoate to yield N-formimidoyl-L-glutamate. It is the third step in the universal histidine degradation pathway. The sequence is that of Imidazolonepropionase from Bacillus cereus (strain G9842).